Consider the following 88-residue polypeptide: KTx type I (88 aa).

Residues 1–19 form the signal peptide; it reads MKTTLVVVVLACIVALTSA. The 35-residue stretch at 54–88 folds into the ShKT domain; that stretch reads CKDVLSEFSCGVLKKDGQCNKADIQAKCKLTCDKC. 3 disulfides stabilise this stretch: C54-C88, C63-C81, and C72-C85.

This sequence belongs to the sea anemone type 1 potassium channel toxin family. As to expression, expressed both outside and in acontia, a specialised envenomation structure laden with batteries of venom-containing nematocysts found only in the superfamily Metridioidea.

The protein localises to the secreted. It is found in the nematocyst. Functionally, inhibits voltage-gated potassium channels (Kv1/KCNA). This is KTx type I from Calliactis polypus (Hermit crab anemone).